A 239-amino-acid polypeptide reads, in one-letter code: uncharacterized protein (239 aa).

In terms of domain architecture, S4 RNA-binding spans 1-65 (MRLDKLLANS…DYREFIYLMM (65 aa)). The Nucleophile role is filled by aspartate 103.

This sequence belongs to the pseudouridine synthase RsuA family.

The catalysed reaction is a uridine in RNA = a pseudouridine in RNA. This is an uncharacterized protein from Bacillus subtilis (strain 168).